A 168-amino-acid chain; its full sequence is Ribosome maturation factor RimM (168 aa).

Residues 94-167 form the PRC barrel domain; that stretch reads DGQYYYHQII…FVTVELMEGL (74 aa).

Belongs to the RimM family. As to quaternary structure, binds ribosomal protein uS19.

Its subcellular location is the cytoplasm. Functionally, an accessory protein needed during the final step in the assembly of 30S ribosomal subunit, possibly for assembly of the head region. Essential for efficient processing of 16S rRNA. May be needed both before and after RbfA during the maturation of 16S rRNA. It has affinity for free ribosomal 30S subunits but not for 70S ribosomes. The sequence is that of Ribosome maturation factor RimM from Limosilactobacillus reuteri (strain DSM 20016) (Lactobacillus reuteri).